Reading from the N-terminus, the 253-residue chain is Redox-sensing transcriptional repressor Rex (253 aa).

Residues 26–65 (LYLRALTALSERSVPTVSSEELATAAGVNSAKLRKDFSYL) constitute a DNA-binding region (H-T-H motif). An NAD(+)-binding site is contributed by 100–105 (GIGNLG). The disordered stretch occupies residues 217–253 (RKAGEDSAAEDEGAPPMRATPASRKGPDGDMPAVMPA).

The protein belongs to the transcriptional regulatory Rex family. Homodimer.

The protein localises to the cytoplasm. In terms of biological role, modulates transcription in response to changes in cellular NADH/NAD(+) redox state. In Streptomyces griseus subsp. griseus (strain JCM 4626 / CBS 651.72 / NBRC 13350 / KCC S-0626 / ISP 5235), this protein is Redox-sensing transcriptional repressor Rex.